The chain runs to 338 residues: MKVYYDKDADLSLIKKKKVAIIGYGSQGHAHANNLNDSGVKVTIGLRKGGASWDKAKKAGLTVKEVGAAVKDADVIMLLLPDEQMASVYQTEVEPVLKKNATLAFAHGFNVHYGQIIPREDLDVIMVAPKGPGHLVRSTYTQGGGVPSLIAVHQDKSGKARDLALSYAAANGGTRGGVIETTFKEETETDLFGEQVVLCGGLTSLIQAGFETLVEAGYAPEMAYFECLHEVKLIVDLIYEGGIANMRYSVSNNAEYGDVSRGPRIITDATRNEMRKILREIQTGEYAREFILENRAGAPVLKSSRRLASEHPIETVGAKLRDMMPWISKNKLVDQAKN.

The region spanning 1–181 is the KARI N-terminal Rossmann domain; that stretch reads MKVYYDKDAD…GGTRGGVIET (181 aa). Residues 24–27, Arg-47, and Ser-52 each bind NADP(+); that span reads YGSQ. His-107 is an active-site residue. Gly-133 contacts NADP(+). One can recognise a KARI C-terminal knotted domain in the interval 182–327; sequence TFKEETETDL…AKLRDMMPWI (146 aa). Residues Asp-190, Glu-194, Glu-226, and Glu-230 each contribute to the Mg(2+) site. Ser-251 contributes to the substrate binding site.

It belongs to the ketol-acid reductoisomerase family. Mg(2+) serves as cofactor.

It carries out the reaction (2R)-2,3-dihydroxy-3-methylbutanoate + NADP(+) = (2S)-2-acetolactate + NADPH + H(+). The catalysed reaction is (2R,3R)-2,3-dihydroxy-3-methylpentanoate + NADP(+) = (S)-2-ethyl-2-hydroxy-3-oxobutanoate + NADPH + H(+). The protein operates within amino-acid biosynthesis; L-isoleucine biosynthesis; L-isoleucine from 2-oxobutanoate: step 2/4. It participates in amino-acid biosynthesis; L-valine biosynthesis; L-valine from pyruvate: step 2/4. Its function is as follows. Involved in the biosynthesis of branched-chain amino acids (BCAA). Catalyzes an alkyl-migration followed by a ketol-acid reduction of (S)-2-acetolactate (S2AL) to yield (R)-2,3-dihydroxy-isovalerate. In the isomerase reaction, S2AL is rearranged via a Mg-dependent methyl migration to produce 3-hydroxy-3-methyl-2-ketobutyrate (HMKB). In the reductase reaction, this 2-ketoacid undergoes a metal-dependent reduction by NADPH to yield (R)-2,3-dihydroxy-isovalerate. The chain is Ketol-acid reductoisomerase (NADP(+)) from Nitrosomonas europaea (strain ATCC 19718 / CIP 103999 / KCTC 2705 / NBRC 14298).